A 425-amino-acid polypeptide reads, in one-letter code: Enolase 2 (425 aa).

A (2R)-2-phosphoglycerate-binding site is contributed by Gln-163. Glu-205 functions as the Proton donor in the catalytic mechanism. Mg(2+)-binding residues include Asp-242, Glu-285, and Asp-312. Lys-337, Arg-366, Ser-367, and Lys-388 together coordinate (2R)-2-phosphoglycerate. Lys-337 functions as the Proton acceptor in the catalytic mechanism.

It belongs to the enolase family. Mg(2+) is required as a cofactor.

The protein localises to the cytoplasm. Its subcellular location is the secreted. It is found in the cell surface. The catalysed reaction is (2R)-2-phosphoglycerate = phosphoenolpyruvate + H2O. It participates in carbohydrate degradation; glycolysis; pyruvate from D-glyceraldehyde 3-phosphate: step 4/5. Its function is as follows. Catalyzes the reversible conversion of 2-phosphoglycerate (2-PG) into phosphoenolpyruvate (PEP). It is essential for the degradation of carbohydrates via glycolysis. This chain is Enolase 2, found in Cupriavidus metallidurans (strain ATCC 43123 / DSM 2839 / NBRC 102507 / CH34) (Ralstonia metallidurans).